A 944-amino-acid chain; its full sequence is Protein translocase subunit SecA (944 aa).

ATP contacts are provided by residues Gln87, 105–109 (GEGKT), and Asp494. The segment at 894–944 (HAAAAGDGEEKPRPKQETVVRTQPKVGRNDPCPCGSGKKYKKCHGATEAAV) is disordered. Over residues 901-911 (GEEKPRPKQET) the composition is skewed to basic and acidic residues. Cys925, Cys927, Cys936, and His937 together coordinate Zn(2+).

This sequence belongs to the SecA family. In terms of assembly, monomer and homodimer. Part of the essential Sec protein translocation apparatus which comprises SecA, SecYEG and auxiliary proteins SecDF-YajC and YidC. Zn(2+) is required as a cofactor.

It is found in the cell inner membrane. The protein resides in the cytoplasm. It carries out the reaction ATP + H2O + cellular proteinSide 1 = ADP + phosphate + cellular proteinSide 2.. Its function is as follows. Part of the Sec protein translocase complex. Interacts with the SecYEG preprotein conducting channel. Has a central role in coupling the hydrolysis of ATP to the transfer of proteins into and across the cell membrane, serving as an ATP-driven molecular motor driving the stepwise translocation of polypeptide chains across the membrane. This is Protein translocase subunit SecA from Anaeromyxobacter sp. (strain Fw109-5).